Here is a 1227-residue protein sequence, read N- to C-terminus: MKLKLTVLLILVHASASYKPPAIEVEDYQVQEHDSIGKFVELEEHTRLILKCSAHHNGDLKYNFPSMEGNVGYDENNFKKRMEEYYDDAFGDKVLTLNDVRESDTGTYSCSSMEHSSLNDTIYVFVHRKKVFLPLKSVMIIYKQGEVMVPCKTTKFVDKSDIELYASNVLVKEASKYNYDQRYGFKITKKLYSEKQIVDVNFECRYKKEENQTATYIITEKEASSDDGYHFSWEKGFQWPHVGYNFSLTCNLNYNGSKIFHGYTNKLSIECPQCSHDPGSHVHVDRHRIIGNKISTTVRIQHLELEDSGKYTCIWEHENKETKYTDYHLYVAPKKAQIKVIETSPTIMRIKENRATSLTAKFAIYPFEKESYTAKWSRIYNSSIHEGPQSETIINDDFRKIAATSFGDGAFSENLDIKAFAVSTNMSGTYVLSISHMDTVQVVQWEVAIENDEPDVQITVREPSSFFISNQEYYKPDTNLHIECISISIPPADVVFEYKTKNSEQFQEIEPNKLVSVGGTFDRGLIYNVTFTEGMDLKCSSIRKGNRAITVNKLIKIGEGFEVRPHHEKSSKATESEPSKIIYEGDNVKLTCVFPLDSDDWSVSWRFENSKSSDISSIPTTTETEIKQYSKHLILNLRDVTTSFTGTYTCVVKNEDSEKLLETSIDVKAISKPSITGGNSNAVVIVDYDQYFEINCNMTGTPPPVYQWFKDGNPYTHGDVDGSILRVSRARGEDDGEFHCLATNRAGDKLNSIEVQVNNAPKGSLFFYWFLALLLLISIIAVFLLTCKLRASNRLTKQKDIALNTLYETMIKHQAGPLPEEMKDLPVEERTYYLPYNNDYEIDPVNLEILNPIGSGHFGVVKKGLLGMAYPKSKIESKTRLPVAVKSSTNPFNVELQKMMAEELKVMCAIPKNPNVLALIGAVTKNMRQGQLYIVTEFIDGGNLREFLQAHRNTFINELVEDEHVPVDDSYLVPNSVKKKIYKFDEKLGEGTRLLVEDPDALCTSDLLSIGLQIAKGMAWLADVPCVHRDLACRNVLITKTKIVRIADFGLSKKHTNKTYYRTKKSKDTPLPVRWMPLECIEEFKFTQKSDVWSFGICLYEIFTLGGTPYPNCDTFNVIEFIRNGNRNKQPEYCHDEIYELMKVCWQFNPKDRPTFNDCITFFENHMRDSSSQFLERVENMLHTEMQEQSKLDDWIQDSRPDVPNVSFQKSPKKQKEERYLIVESHA.

The first 17 residues, Met1–Ser17, serve as a signal peptide directing secretion. Topologically, residues Tyr18–Ser764 are extracellular. The region spanning Pro20–Cys110 is the Ig-like C2-type 1 domain. Cys52 and Cys110 are disulfide-bonded. Residues Asn119, Asn211, Asn245, Asn255, Asn381, Asn425, and Asn528 are each glycosylated (N-linked (GlcNAc...) asparagine). The Ig-like C2-type 2 domain occupies Val200–Thr325. An intrachain disulfide couples Cys204 to Cys313. 2 Ig-like C2-type domains span residues Pro565 to Asp666 and Pro673 to Asn758. 2 cysteine pairs are disulfide-bonded: Cys592-Cys650 and Cys696-Cys740. Asn697 carries an N-linked (GlcNAc...) asparagine glycan. A helical membrane pass occupies residues Leu765 to Leu785. The Cytoplasmic portion of the chain corresponds to Thr786–Ala1227. Residues Leu847–Leu1175 enclose the Protein kinase domain. ATP is bound by residues Ile853–Val861 and Lys886. Residue Asp1030 is the Proton acceptor of the active site. A disordered region spans residues Asp1194–Ala1227. Residues Lys1214–Ala1227 are compositionally biased toward basic and acidic residues.

The protein belongs to the protein kinase superfamily. Tyr protein kinase family. Expressed in the ALA neuron.

Its subcellular location is the cell membrane. The enzyme catalyses L-tyrosyl-[protein] + ATP = O-phospho-L-tyrosyl-[protein] + ADP + H(+). Its function is as follows. Receptor tyrosine kinase which may be involved, downstream of pvf-1, in the positioning of ray 1, the most anterior ray sensillum in the male tail. The protein is Tyrosine-protein kinase receptor ver-3 of Caenorhabditis elegans.